The chain runs to 203 residues: NAD(P)H-quinone oxidoreductase subunit M, chloroplastic (203 aa).

Residues 1–21 (MAASSSYMACAKFSMLGWLGG) constitute a chloroplast transit peptide. Positions 34–48 (SPQEQAEVQESQEVN) are enriched in low complexity. The disordered stretch occupies residues 34–61 (SPQEQAEVQESQEVNAQEEEKVKQPVQP).

This sequence belongs to the NDH complex subunit M family. As to quaternary structure, part of the chloroplast NDH complex, composed of a mixture of chloroplast and nucleus encoded subunits. Component of the NDH subcomplex A, at least composed of ndhH, ndhI, ndhJ, ndhK, ndhL, ndhM, ndhN and ndhO.

It is found in the plastid. Its subcellular location is the chloroplast thylakoid membrane. The enzyme catalyses a plastoquinone + NADH + (n+1) H(+)(in) = a plastoquinol + NAD(+) + n H(+)(out). It carries out the reaction a plastoquinone + NADPH + (n+1) H(+)(in) = a plastoquinol + NADP(+) + n H(+)(out). Its function is as follows. NDH shuttles electrons from NAD(P)H:plastoquinone, via FMN and iron-sulfur (Fe-S) centers, to quinones in the photosynthetic chain and possibly in a chloroplast respiratory chain. The immediate electron acceptor for the enzyme in this species is believed to be plastoquinone. Couples the redox reaction to proton translocation, and thus conserves the redox energy in a proton gradient. The chain is NAD(P)H-quinone oxidoreductase subunit M, chloroplastic from Populus jackii (Balm of Gilead).